We begin with the raw amino-acid sequence, 192 residues long: UPF0301 protein Bmul_2524/BMULJ_00714 (192 aa).

It belongs to the UPF0301 (AlgH) family.

The protein is UPF0301 protein Bmul_2524/BMULJ_00714 of Burkholderia multivorans (strain ATCC 17616 / 249).